The following is a 101-amino-acid chain: Large ribosomal subunit protein uL24 (101 aa).

Belongs to the universal ribosomal protein uL24 family. In terms of assembly, part of the 50S ribosomal subunit.

Functionally, one of two assembly initiator proteins, it binds directly to the 5'-end of the 23S rRNA, where it nucleates assembly of the 50S subunit. One of the proteins that surrounds the polypeptide exit tunnel on the outside of the subunit. In Streptococcus equi subsp. zooepidemicus (strain H70), this protein is Large ribosomal subunit protein uL24.